The primary structure comprises 103 residues: Pyrimidine/purine nucleoside phosphorylase (103 aa).

It belongs to the nucleoside phosphorylase PpnP family.

It catalyses the reaction a purine D-ribonucleoside + phosphate = a purine nucleobase + alpha-D-ribose 1-phosphate. The enzyme catalyses adenosine + phosphate = alpha-D-ribose 1-phosphate + adenine. It carries out the reaction cytidine + phosphate = cytosine + alpha-D-ribose 1-phosphate. The catalysed reaction is guanosine + phosphate = alpha-D-ribose 1-phosphate + guanine. It catalyses the reaction inosine + phosphate = alpha-D-ribose 1-phosphate + hypoxanthine. The enzyme catalyses thymidine + phosphate = 2-deoxy-alpha-D-ribose 1-phosphate + thymine. It carries out the reaction uridine + phosphate = alpha-D-ribose 1-phosphate + uracil. The catalysed reaction is xanthosine + phosphate = alpha-D-ribose 1-phosphate + xanthine. In terms of biological role, catalyzes the phosphorolysis of diverse nucleosides, yielding D-ribose 1-phosphate and the respective free bases. Can use uridine, adenosine, guanosine, cytidine, thymidine, inosine and xanthosine as substrates. Also catalyzes the reverse reactions. The protein is Pyrimidine/purine nucleoside phosphorylase of Shewanella sp. (strain ANA-3).